The sequence spans 428 residues: Glutamate-1-semialdehyde 2,1-aminomutase (428 aa).

An N6-(pyridoxal phosphate)lysine modification is found at Lys-265.

The protein belongs to the class-III pyridoxal-phosphate-dependent aminotransferase family. HemL subfamily. As to quaternary structure, homodimer. Pyridoxal 5'-phosphate is required as a cofactor.

The protein resides in the cytoplasm. The catalysed reaction is (S)-4-amino-5-oxopentanoate = 5-aminolevulinate. It functions in the pathway porphyrin-containing compound metabolism; protoporphyrin-IX biosynthesis; 5-aminolevulinate from L-glutamyl-tRNA(Glu): step 2/2. In Thioalkalivibrio sulfidiphilus (strain HL-EbGR7), this protein is Glutamate-1-semialdehyde 2,1-aminomutase.